Reading from the N-terminus, the 146-residue chain is Hemoglobin subunit beta (146 aa).

Valine 1 bears the N-acetylvaline mark. Residues histidine 2–histidine 146 enclose the Globin domain. Position 12 is a phosphothreonine (threonine 12). Phosphoserine is present on serine 44. Lysine 59 is subject to N6-acetyllysine. Histidine 63 provides a ligand contact to heme b. An N6-acetyllysine modification is found at lysine 82. Heme b is bound at residue histidine 92. Cysteine 93 carries the S-nitrosocysteine modification. At lysine 144 the chain carries N6-acetyllysine.

Belongs to the globin family. Heterotetramer of two alpha chains and two beta chains. As to expression, red blood cells.

Involved in oxygen transport from the lung to the various peripheral tissues. The protein is Hemoglobin subunit beta of Peromyscus crinitus (Canyon mouse).